The primary structure comprises 465 residues: Antithrombin-III (465 aa).

The signal sequence occupies residues 1-32; the sequence is MISNGIGTVTAGKRSICLLPLLLIGLWGCVTC. 2 disulfide bridges follow: Cys-41–Cys-161 and Cys-54–Cys-128. Thr-64 bears the Phosphothreonine mark. Ser-69 is modified (phosphoserine). Trp-82 provides a ligand contact to heparin. The N-linked (GlcNAc...) asparagine glycan is linked to Asn-129. Arg-162 provides a ligand contact to heparin. N-linked (GlcNAc...) asparagine glycosylation is present at Asn-168. Arg-178 contacts heparin. 2 N-linked (GlcNAc...) asparagine glycosylation sites follow: Asn-188 and Asn-225. Cysteines 280 and 463 form a disulfide.

It belongs to the serpin family. In terms of assembly, forms protease inhibiting heterodimer with TMPRSS7. Phosphorylated by FAM20C in the extracellular medium. Plasma.

The protein localises to the secreted. It localises to the extracellular space. Functionally, most important serine protease inhibitor in plasma that regulates the blood coagulation cascade. AT-III inhibits thrombin, matriptase-3/TMPRSS7, as well as factors IXa, Xa and XIa. Its inhibitory activity is greatly enhanced in the presence of heparin. This is Antithrombin-III (SERPINC1) from Bos taurus (Bovine).